The following is a 204-amino-acid chain: Large ribosomal subunit protein uL4 (204 aa).

A disordered region spans residues 44 to 76 (KRQGTQSAKTRSEVRGGGIKPWRQKGTGRARQG).

It belongs to the universal ribosomal protein uL4 family. In terms of assembly, part of the 50S ribosomal subunit.

In terms of biological role, one of the primary rRNA binding proteins, this protein initially binds near the 5'-end of the 23S rRNA. It is important during the early stages of 50S assembly. It makes multiple contacts with different domains of the 23S rRNA in the assembled 50S subunit and ribosome. Functionally, forms part of the polypeptide exit tunnel. The protein is Large ribosomal subunit protein uL4 of Clostridium perfringens (strain 13 / Type A).